The sequence spans 460 residues: CWF19-like protein 2 homolog (460 aa).

Disordered stretches follow at residues 38–78 (GKTF…EDEK), 103–175 (KLES…TGTA), and 193–227 (RRHD…ESIK). Residues 54–68 (GSQQVRNDVMKSSDS) are compositionally biased toward polar residues. Residues 84-106 (KILKAEMKGDTDLVKKLKRKLES) adopt a coiled-coil conformation. Basic and acidic residues-rich tracts occupy residues 113 to 131 (EPPK…DREG), 139 to 172 (RRSD…EEKT), and 205 to 227 (EMQK…ESIK). Residues 210 to 231 (KKKSDEKDKKRKEKESIKEHKR) are a coiled coil.

This sequence belongs to the CWF19 family.

The protein is CWF19-like protein 2 homolog of Caenorhabditis elegans.